Consider the following 267-residue polypeptide: Myb-related protein Hv1 (267 aa).

HTH myb-type domains follow at residues 9–61 (KAHT…INYL) and 62–116 (RPDL…RRKL). 2 DNA-binding regions (H-T-H motif) span residues 37–61 (WRSL…INYL) and 89–112 (WSLI…NTHI).

In terms of tissue distribution, germinating seed and apical meristem of shoot and root.

The protein localises to the nucleus. Its function is as follows. Possible transcription activator in response to an external signal. May be involved in the regulation of flavonoid biosynthesis. In Hordeum vulgare (Barley), this protein is Myb-related protein Hv1 (MYB1).